We begin with the raw amino-acid sequence, 368 residues long: MERTMSDAKLQRVLSSLTEVYRQLNSLPSSQPSDAGYVKLDTNENPFALPKAVMQSAVAALERQYLYPEDDNISLREAAAASYDLSADQVIAGNGSSELLSLIYKAFLGPGDSVAMLSPGFAYNRKLAQLQGARLLEIKWGESSLLPIHELLFGPAKQAKFILLANPNNPTGTFVPIADIESLVALSDQLVVLDEAYVDFAPDSALRLVNRYSNLLLLRTFSKSYAAAGIRVGFGFGHPEVIGRLRNIQNMFNMNVIGHAVGVSILAHRATYNENHRHIRHERERVRVALSRLGFSVTPSHANFLLARVPAGRDGVWWHACLKRKKILVAVLPDEGLEDCIRVSIGTKPQMDAFLAAVEDISGAQQSR.

Lys-223 carries the N6-(pyridoxal phosphate)lysine modification.

Belongs to the class-II pyridoxal-phosphate-dependent aminotransferase family. Histidinol-phosphate aminotransferase subfamily. Homodimer. Pyridoxal 5'-phosphate serves as cofactor.

The enzyme catalyses L-histidinol phosphate + 2-oxoglutarate = 3-(imidazol-4-yl)-2-oxopropyl phosphate + L-glutamate. It participates in amino-acid biosynthesis; L-histidine biosynthesis; L-histidine from 5-phospho-alpha-D-ribose 1-diphosphate: step 7/9. This is Histidinol-phosphate aminotransferase (hisC) from Sinorhizobium fredii (strain NBRC 101917 / NGR234).